The chain runs to 492 residues: Metal cation symporter ZIP14 (492 aa).

Positions 1–30 (MKLLLLHPAFQSCLLLTLLGLWRTTPEAHA) are cleaved as a signal peptide. At 31 to 157 (SSLGAPAISA…PSAVEVWGYG (127 aa)) the chain is on the extracellular side. Asn77, Asn87, and Asn102 each carry an N-linked (GlcNAc...) asparagine glycan. A helical membrane pass occupies residues 158–178 (LLCVTVISLCSLLGASVVPFM). Topologically, residues 179–186 (KKTFYKRL) are cytoplasmic. The chain crosses the membrane as a helical span at residues 187–207 (LLYFIALAIGTLYSNALFQLI). Over 208-224 (PEAFGFNPLEDYYVSKS) the chain is Extracellular. The chain crosses the membrane as a helical span at residues 225-245 (AVVFGGFYLFFFTEKILKILL). Topologically, residues 246 to 397 (KQKNEHHHGH…LLNAGMSIQQ (152 aa)) are cytoplasmic. Positions 251-258 (HHHGHSHY) match the HHHGHXHX-motif motif. Positions 376–381 (EEFPHE) match the XEXPHE-motif motif. The helical transmembrane segment at 398–418 (ALFFNFLSACCCYLGLAFGIL) threads the bilayer. At 419-424 (AGSHFS) the chain is on the extracellular side. The chain crosses the membrane as a helical span at residues 425-445 (ANWIFALAGGMFLYISLADMF). Residues 446-460 (PEMNEVCQEDERKGS) lie on the Cytoplasmic side of the membrane. A helical transmembrane segment spans residues 461–481 (ILIPFIIQNLGLLTGFTIMVV). The Extracellular portion of the chain corresponds to 482–492 (LTMYSGQIQIG).

The protein belongs to the ZIP transporter (TC 2.A.5) family. Homotrimer. Ubiquitinated. Ubiquitination occurs upon iron depletion. The ubiquitinated form undergoes proteasomal degradation. Post-translationally, N-glycosylated. N-glycosylation at Asn-102 is required for iron-regulated extraction of the transporter from membranes and subsequent proteasomal degradation. In terms of tissue distribution, ubiquitously expressed, with higher expression in liver, pancreas, fetal liver, thyroid gland, left and right ventricle, right atrium and fetal heart. Weakly expressed in spleen, thymus, and peripheral blood leukocytes. Expressed in liver and in brain by large neurons in the globus pallidus, the insular cortex and the dentate nucleus and to a lower extent in the putamen and the caudate nucleus (at protein level). Expressed in osteoblasts and giant osteoclast-like cells, but not in osteocytes found osteoblastoma and giant cell tumors (at protein level). Expressed by microvascular capillary endothelial cells that constitute the blood-brain barrier (at protein level). Expressed by macrophages. Widely expressed but not detected in brain, heart, skeletal muscle, placenta and fetal skin.

The protein localises to the cell membrane. It localises to the apical cell membrane. It is found in the basolateral cell membrane. Its subcellular location is the early endosome membrane. The protein resides in the late endosome membrane. The protein localises to the lysosome membrane. It catalyses the reaction Zn(2+)(out) + 2 hydrogencarbonate(out) = Zn(2+)(in) + 2 hydrogencarbonate(in). It carries out the reaction Mn(2+)(out) + 2 hydrogencarbonate(out) = Mn(2+)(in) + 2 hydrogencarbonate(in). The catalysed reaction is Fe(2+)(out) + 2 hydrogencarbonate(out) = Fe(2+)(in) + 2 hydrogencarbonate(in). The enzyme catalyses Cd(2+)(out) + 2 hydrogencarbonate(out) = Cd(2+)(in) + 2 hydrogencarbonate(in). Electroneutral transporter of the plasma membrane mediating the cellular uptake of the divalent metal cations zinc, manganese and iron that are important for tissue homeostasis, metabolism, development and immunity. Functions as an energy-dependent symporter, transporting through the membranes an electroneutral complex composed of a divalent metal cation and two bicarbonate anions. Beside these endogenous cellular substrates, can also import cadmium a non-essential metal which is cytotoxic and carcinogenic. Controls the cellular uptake by the intestinal epithelium of systemic zinc, which is in turn required to maintain tight junctions and the intestinal permeability. Modifies the activity of zinc-dependent phosphodiesterases, thereby indirectly regulating G protein-coupled receptor signaling pathways important for gluconeogenesis and chondrocyte differentiation. Regulates insulin receptor signaling, glucose uptake, glycogen synthesis and gluconeogenesis in hepatocytes through the zinc-dependent intracellular catabolism of insulin. Through zinc cellular uptake also plays a role in the adaptation of cells to endoplasmic reticulum stress. Major manganese transporter of the basolateral membrane of intestinal epithelial cells, it plays a central role in manganese systemic homeostasis through intestinal manganese uptake. Also involved in manganese extracellular uptake by cells of the blood-brain barrier. May also play a role in manganese and zinc homeostasis participating in their elimination from the blood through the hepatobiliary excretion. Also functions in the extracellular uptake of free iron. May also function intracellularly and mediate the transport from endosomes to cytosol of iron endocytosed by transferrin. Plays a role in innate immunity by regulating the expression of cytokines by activated macrophages. The chain is Metal cation symporter ZIP14 from Homo sapiens (Human).